The sequence spans 422 residues: MGMTRMLLECSLSDKLCVIQEKQYEVIIVPTLLVTIFLILLGVILWLFIREQRTQQQRSGPQGIAPVPPPRDLSWEAGHGGNVALPLKETSVENFLGATTPALAKLQVPREQLSEVLEQICSGSCGPIFRANMNTGDPSKPKSVILKALKEPAGLHEVQDFLGRIQFHQYLGKHKNLVQLEGCCTEKLPLYMVLEDVAQGDLLSFLWTCRRDVMTMDGLLYDLTEKQVYHIGKQVLLALEFLQEKHLFHGDVAARNILMQSDLTAKLCGLGLAYEVYTRGAISSTQTIPLKWLAPERLLLRPASIRADVWSFGILLYEMVTLGAPPYPEVPPTSILEHLQRRKIMKRPSSCTHTMYSIMKSCWRWREADRPSPRELRLRLEAAIKTADDEAVLQVPELVVPELYAAVAGIRVESLFYNYSML.

Residues 26-46 (VIIVPTLLVTIFLILLGVILW) form a helical membrane-spanning segment. One can recognise a Protein kinase domain in the interval 114–384 (SEVLEQICSG…ELRLRLEAAI (271 aa)). ATP contacts are provided by residues 120–128 (ICSGSCGPI) and K147. The active-site Proton acceptor is D251.

Belongs to the protein kinase superfamily. Tyr protein kinase family. As to expression, widely expressed. Highly expressed in brain, placenta and prostate. Expressed in tumor cells such as hepatoma cells L-02, cervix carcinoma cells HeLa, ovary cancer cells Ho8910 and chronic myelogenous leukemia cells K-562, but not in other tumor cells such as epidermoid carcinoma (A-431). Undetectable in most normal lung tissues, widely expressed in lung cancers.

Its subcellular location is the membrane. The enzyme catalyses L-tyrosyl-[protein] + ATP = O-phospho-L-tyrosyl-[protein] + ADP + H(+). Functionally, probable tyrosine protein-kinase, which has strong transforming capabilities on a variety of cell lines. When overexpressed, it can also induce tumor cell invasion as well as metastasis in distant organs. May act by activating both MAP kinase and phosphatidylinositol 3'-kinases (PI3K) pathways. The protein is Tyrosine-protein kinase STYK1 (STYK1) of Homo sapiens (Human).